The chain runs to 319 residues: ADP-L-glycero-D-manno-heptose-6-epimerase (319 aa).

NADP(+)-binding positions include 10–11 (FI), 31–32 (DD), lysine 38, lysine 53, and 75–79 (EGACS). Tyrosine 139 functions as the Proton acceptor in the catalytic mechanism. Residue lysine 143 participates in NADP(+) binding. Asparagine 168 is a substrate binding site. NADP(+)-binding residues include valine 169 and lysine 177. The active-site Proton acceptor is the lysine 177. Substrate-binding positions include serine 179, histidine 186, 200-203 (FEGA), arginine 213, and tyrosine 281.

This sequence belongs to the NAD(P)-dependent epimerase/dehydratase family. HldD subfamily. In terms of assembly, homopentamer. The cofactor is NADP(+).

The catalysed reaction is ADP-D-glycero-beta-D-manno-heptose = ADP-L-glycero-beta-D-manno-heptose. Its pathway is nucleotide-sugar biosynthesis; ADP-L-glycero-beta-D-manno-heptose biosynthesis; ADP-L-glycero-beta-D-manno-heptose from D-glycero-beta-D-manno-heptose 7-phosphate: step 4/4. Its function is as follows. Catalyzes the interconversion between ADP-D-glycero-beta-D-manno-heptose and ADP-L-glycero-beta-D-manno-heptose via an epimerization at carbon 6 of the heptose. This Aromatoleum aromaticum (strain DSM 19018 / LMG 30748 / EbN1) (Azoarcus sp. (strain EbN1)) protein is ADP-L-glycero-D-manno-heptose-6-epimerase.